A 197-amino-acid polypeptide reads, in one-letter code: Nucleoid occlusion factor SlmA (197 aa).

One can recognise an HTH tetR-type domain in the interval 7–67 (ISRREHILQC…GLIEFIEDSL (61 aa)). Residues 30 to 49 (TTAKLAAEVGVSEAALYRHF) constitute a DNA-binding region (H-T-H motif).

The protein belongs to the nucleoid occlusion factor SlmA family. As to quaternary structure, homodimer. Interacts with FtsZ.

The protein resides in the cytoplasm. The protein localises to the nucleoid. Functionally, required for nucleoid occlusion (NO) phenomenon, which prevents Z-ring formation and cell division over the nucleoid. Acts as a DNA-associated cell division inhibitor that binds simultaneously chromosomal DNA and FtsZ, and disrupts the assembly of FtsZ polymers. SlmA-DNA-binding sequences (SBS) are dispersed on non-Ter regions of the chromosome, preventing FtsZ polymerization at these regions. This is Nucleoid occlusion factor SlmA from Shewanella amazonensis (strain ATCC BAA-1098 / SB2B).